Consider the following 3961-residue polypeptide: Replicase polyprotein 1ab (3961 aa).

The C4-type; atypical zinc finger occupies 8–28 (CTCTPNARVFVAEGQVYCTRC). The Peptidase C31 domain occupies 69-180 (ECSPAGACWL…EDFCPFECAM (112 aa)). The PCP1-alpha stretch occupies residues 69-182 (ECSPAGACWL…FCPFECAMAT (114 aa)). Residues cysteine 76 and histidine 146 each act as for Nsp1-alpha papain-like cysteine proteinase activity in the active site. Positions 199 to 200 (IS) are important for host EIF2AK2 inhibition. The PCP1-beta stretch occupies residues 263 to 382 (DTVPEGNCWW…IFRFGSHKWY (120 aa)). The Peptidase C32 domain occupies 263-383 (DTVPEGNCWW…FRFGSHKWYG (121 aa)). Residues cysteine 270 and histidine 339 each act as for Nsp1-beta papain-like cysteine proteinase activity in the active site. The segment at 426–513 (LKHYSPPAEG…GEHWTVTVTP (88 aa)) is OTU-like. In terms of domain architecture, Peptidase C33 spans 428–535 (HYSPPAEGNC…QGCCEHKGGL (108 aa)). Active-site for Nsp2 cysteine proteinase activity residues include cysteine 437 and histidine 506. Disordered regions lie at residues 809–862 (RWTP…NSWE), 898–979 (ATPL…GVLG), and 1153–1213 (NQEP…GGGP). Residues 810–819 (WTPPPPPPKV) are compositionally biased toward pro residues. A run of 8 helical transmembrane segments spans residues 1266–1286 (LCLFLCYSYPAFGIAPLLGVF), 1296–1316 (GVFGCWLAFAVGLFKPVSDPV), 1345–1365 (SLVVGPVGLGLAILGRLLGGA), 1368–1388 (IWHFLLRLGIVADCILAGAYV), 1583–1603 (LMAALHVACSMALHMLTGIYV), 1650–1670 (ALVAGFGIQEIALVVLIFVSI), 1685–1705 (CILLAIASYVWVPLTWLLCVF), and 1719–1739 (ILWLVFFLISVNMPSGILAMV). Residues 1266–1388 (LCLFLCYSYP…ADCILAGAYV (123 aa)) form an HD1 region. The interval 1583–1745 (LMAALHVACS…LAMVLLVSLW (163 aa)) is HD2. One can recognise a Peptidase S32 domain in the interval 1810–2013 (GAFRTRKPSL…ALLAAKPELE (204 aa)). Active-site charge relay system; for 3C-like serine proteinase activity residues include histidine 1848, aspartate 1873, and serine 1927. Helical transmembrane passes span 2012–2032 (LEGGLSTVQLLCVFFLLWRMM), 2060–2080 (FSFGMFVLSWLTPWSAQILMI), 2092–2112 (WSLAFFSLGAVTGFVADLAAT), 2137–2157 (SPVPVITCGVVHLLAIILYLF), and 2164–2184 (QILVGDGVFSAAFFLRYFAEG). The interval 2036 to 2157 (WTPLVAVSFF…HLLAIILYLF (122 aa)) is HD3. The tract at residues 2329–2358 (PTPTPPPAPVPIPLPPKVLENGPNAWGDED) is disordered. A compositionally biased stretch (pro residues) spans 2330 to 2344 (TPTPPPAPVPIPLPP). The region spanning 2488 to 2651 (IIDKLQGLTK…LPYKLYPVRG (164 aa)) is the NiRAN domain. The RdRp catalytic domain occupies 2890–3024 (GRCLEADLAS…YAESPTMPNY (135 aa)). Positions 3145–3208 (GKKSRVCGYC…SPVGKGTSPL (64 aa)) constitute an AV ZBD domain. Positions 3151, 3154, 3164, 3169, 3172, 3174, 3176, 3178, 3185, 3187, 3194, and 3197 each coordinate Zn(2+). In terms of domain architecture, (+)RNA virus helicase ATP-binding spans 3265-3417 (ASTALLPTCK…VFDIMPQTQL (153 aa)). Position 3298-3305 (3298-3305 (GKTYWLLQ)) interacts with ATP. The region spanning 3418 to 3546 (KTIWRFGQNI…AVHRDGQLIV (129 aa)) is the (+)RNA virus helicase C-terminal domain. One can recognise an AV-Nsp11N/CoV-Nsp15M domain in the interval 3585 to 3681 (EGSSSPLPKV…LTKFVKGEAQ (97 aa)). The 123-residue stretch at 3683–3805 (LPETVFSTGR…MVWRDKTAYF (123 aa)) folds into the NendoU domain. Active-site residues include histidine 3714, histidine 3729, and lysine 3758.

It belongs to the arteriviridae polyprotein family. As to quaternary structure, nsp1-alpha papain-like: Interacts with host RNF31. Interacts with host EIF2AK2; this interaction occurs in host stress granules and leads to EIF2AK2 inhibition. Interacts with host G3BP1; this interaction probably plays a role in Nsp1-beta-mediated inhibition of host EIF2AK2. In terms of assembly, interacts with host DDX18; this interaction redistributes host DDX18 to the cytoplasm. As to quaternary structure, interacts with host IFITM1. Interacts with host DDX5. In terms of assembly, interacts with host OTULIN. As to quaternary structure, interacts with host LGALS3. Specific enzymatic cleavages in vivo by its own proteases yield mature proteins. Nsp1 is autocleaved into two subunits, Nsp1-alpha and Nsp1-beta. There are two alternative pathways for processing. Either nsp4-5 is cleaved, which represents the major pathway or the nsp5-6 and nsp6-7 are processed, which represents the minor pathway. The major pathway occurs when nsp2 acts as a cofactor for nsp4.

Its subcellular location is the host nucleus. The protein resides in the host cytoplasm. It is found in the host membrane. It localises to the host endoplasmic reticulum. The protein localises to the host perinuclear region. It catalyses the reaction RNA(n) + a ribonucleoside 5'-triphosphate = RNA(n+1) + diphosphate. The enzyme catalyses ATP + H2O = ADP + phosphate + H(+). It carries out the reaction Thiol-dependent hydrolysis of ester, thioester, amide, peptide and isopeptide bonds formed by the C-terminal Gly of ubiquitin (a 76-residue protein attached to proteins as an intracellular targeting signal).. The catalysed reaction is uridylyl-uridylyl-ribonucleotide-RNA = a 3'-end uridylyl-2',3'-cyclophospho-uridine-RNA + a 5'-end dephospho-ribonucleoside-RNA. Contains the activities necessary for the transcription of negative stranded RNA, leader RNA, subgenomic mRNAs and progeny virion RNA as well as proteinases responsible for the cleavage of the polyprotein into functional products. Functionally, inhibits host IFN-beta production. Plays a role in the degradation of the host transcriptional activator CREBBP protein. The degradation of host CREBBP which is a key component of the IFN enhanceosome is likely responsible for the inhibition of interferon mediated by Nsp1-alpha. Also participates in the inhibition of host NF-kappa-B activation by counteracting LUBAC-dependent induction of NF-kappa-B. Reduces host NEMO ubiquitination by blocking the interaction between the two LUBAC complex components RNF31 and SHARPIN. Its function is as follows. Plays a role in blocking host mRNA nuclear export to the cytoplasm and subversion of host protein synthesis. Additionally, inhibits the interferon-activated JAK/STAT signal transduction by mediating the ubiquitination and subsequent proteasomal degradation of host KPNA1. Repurposes the host antiviral stress granules into a proviral platform to counteract the EIF2AK2/PKR restriction, thereby regulating the host inflammatory response. In terms of biological role, multifunctional protein that acts as a viral protease and as a viral antagonist of host immune response. Cleaves the nsp2/nsp3 site in the viral polyprotein. Displays deubiquitinating activity that cleaves both ubiquitinated and ISGylated products and therefore inhibits ubiquitin and ISG15-dependent host innate immunity. Also deubiquinates host NFKBIA, thereby interfering with NFKBIA degradation and impairing subsequent NF-kappa-B activation. Plays a role in the inhibition of the immune response by interacting with host IFITM1. This interaction leads to the proteasomal degradation of the IFN-induced antiviral protein IFITM1. Functionally, cleaves the majority of cleavage sites present in the C-terminus of the polyprotein. Triggers host apoptosis through caspase-3, -8, and -9 activations. Subverts host innate immune responses through its protease activity. Targets the NF-kappa-B essential modulator NEMO and mediates its cleavage. Blocks host interferon beta induction and downstream signaling by cleaving mitochondrial MAVS, dislodging it from the mitochondria. Impairs host defense by cleaving host mRNA-decapping enzyme DCP1A to attenuate its antiviral activity. Its function is as follows. Plays a role in the initial induction of autophagosomes from host endoplasmic reticulum. In terms of biological role, plays a role in the inhibition of host STAT3 signaling pathway by inducing the degradation of STAT3. Responsible for replication and transcription of the viral RNA genome. Functionally, displays RNA and DNA duplex-unwinding activities with 5' to 3' polarity. Its function is as follows. Plays a role in viral transcription/replication and prevents the simultaneous activation of host cell dsRNA sensors, such as MDA5/IFIH1, OAS, PKR and NLRP3 inflammasome. Acts by degrading the 5'-polyuridines generated during replication of the poly(A) region of viral genomic and subgenomic RNAs. Catalyzes a two-step reaction in which a 2'3'-cyclic phosphate (2'3'-cP) is first generated by 2'-O transesterification, which is then hydrolyzed to a 3'-phosphate (3'-P). If not degraded, poly(U) RNA would hybridize with poly(A) RNA tails and activate host dsRNA sensors. Also plays a role in the inhibition of host type I interferon production by recruiting host OTULIN to promote removal of linear ubiquitination targeting host NEMO. The polypeptide is Replicase polyprotein 1ab (rep) (Porcine reproductive and respiratory syndrome virus (strain 16244B) (PRRSV)).